Here is a 215-residue protein sequence, read N- to C-terminus: Thiamine import ATP-binding protein ThiQ (215 aa).

Positions 2 to 215 (IYLNNVILND…GQISQLQKGV (214 aa)) constitute an ABC transporter domain. Residue 32 to 39 (GESGAGKS) coordinates ATP.

Belongs to the ABC transporter superfamily. Thiamine importer (TC 3.A.1.19.1) family. As to quaternary structure, the complex is composed of two ATP-binding proteins (ThiQ), two transmembrane proteins (ThiP) and a solute-binding protein (ThiB).

The protein localises to the cell inner membrane. It catalyses the reaction thiamine(out) + ATP + H2O = thiamine(in) + ADP + phosphate + H(+). Functionally, part of the ABC transporter complex ThiBPQ involved in thiamine import. Responsible for energy coupling to the transport system. The protein is Thiamine import ATP-binding protein ThiQ of Haemophilus influenzae (strain ATCC 51907 / DSM 11121 / KW20 / Rd).